We begin with the raw amino-acid sequence, 533 residues long: Flavin-containing monooxygenase 5 (533 aa).

A Dimethylated arginine modification is found at Arg-5. FAD-binding positions include 10–14, Glu-33, and 41–42; these read GAGAS and LW. The residue at position 54 (Ser-54) is a Phosphoserine. At Tyr-56 the chain carries Phosphotyrosine. Position 58 is a phosphoserine (Ser-58). 62–63 serves as a coordination point for FAD; that stretch reads NT. 196 to 199 provides a ligand contact to NADP(+); the sequence is SGGD. Position 280 is a phosphoserine (Ser-280). A Phosphothreonine modification is found at Thr-284. Phosphoserine is present on Ser-401. The chain crosses the membrane as a helical span at residues 513-533; sequence LVTVRVLMLAVAFFAVILAYF.

Belongs to the FMO family. It depends on FAD as a cofactor. Expressed in liver (at protein level). Expressed in the mucosal epithelium of the gastrointestinal tract.

The protein resides in the microsome membrane. It localises to the endoplasmic reticulum membrane. The catalysed reaction is N,N-dimethylaniline + NADPH + O2 + H(+) = N,N-dimethylaniline N-oxide + NADP(+) + H2O. It carries out the reaction NADPH + O2 + H(+) = H2O2 + NADP(+). The enzyme catalyses heptan-2-one + NADPH + O2 + H(+) = pentyl acetate + NADP(+) + H2O. It catalyses the reaction octan-3-one + NADPH + O2 + H(+) = pentyl propanoate + NADP(+) + H2O. The catalysed reaction is octan-3-one + NADPH + O2 + H(+) = ethyl hexanoate + NADP(+) + H2O. It carries out the reaction hexan-3-one + NADPH + O2 + H(+) = ethyl butanoate + NADP(+) + H2O. The enzyme catalyses hexan-3-one + NADPH + O2 + H(+) = propyl propanoate + NADP(+) + H2O. It catalyses the reaction heptan-4-one + NADPH + O2 + H(+) = propyl butanoate + NADP(+) + H2O. The catalysed reaction is (2E)-geranial + NADPH + O2 + H(+) = (1E)-2,6-dimethylhepta-1,5-dien-1-yl formate + NADP(+) + H2O. It carries out the reaction sulcatone + NADPH + O2 + H(+) = 4-methylpent-3-en-1-yl acetate + NADP(+) + H2O. In terms of biological role, acts as a Baeyer-Villiger monooxygenase on a broad range of substrates. Catalyzes the insertion of an oxygen atom into a carbon-carbon bond adjacent to a carbonyl, which converts ketones to esters. Active on diverse carbonyl compounds, whereas soft nucleophiles are mostly non- or poorly reactive. In contrast with other forms of FMO it is non- or poorly active on 'classical' substrates such as drugs, pesticides, and dietary components containing soft nucleophilic heteroatoms. Able to oxidize drug molecules bearing a carbonyl group on an aliphatic chain, such as nabumetone and pentoxifylline. Also, in the absence of substrates, shows slow but yet significant NADPH oxidase activity. Acts as a positive modulator of cholesterol biosynthesis as well as glucose homeostasis, promoting metabolic aging via pleiotropic effects. The sequence is that of Flavin-containing monooxygenase 5 from Mus musculus (Mouse).